A 122-amino-acid chain; its full sequence is Large ribosomal subunit protein uL14c (122 aa).

Belongs to the universal ribosomal protein uL14 family. Part of the 50S ribosomal subunit.

The protein resides in the plastid. Binds to 23S rRNA. This chain is Large ribosomal subunit protein uL14c (rpl14), found in Helicosporidium sp. subsp. Simulium jonesii (Green alga).